A 264-amino-acid polypeptide reads, in one-letter code: 1H-3-hydroxy-4-oxoquinoline 2,4-dioxygenase (264 aa).

Residues 30 to 32 (WCQ), 94 to 95 (TS), and W153 contribute to the substrate site. H244 serves as the catalytic Proton donor/acceptor.

It belongs to the AB hydrolase superfamily. The cofactor is None. Contrary to most other dioxygenases, this enzyme does not require a cofactor for catalysis..

The catalysed reaction is 3-hydroxy-1H-quinolin-4-one + O2 = N-formylanthranilate + CO + H(+). Functionally, ring-cleaving dioxygenase involved in oxoquinoline degradation and utilization. This chain is 1H-3-hydroxy-4-oxoquinoline 2,4-dioxygenase (qdo), found in Pseudomonas putida (Arthrobacter siderocapsulatus).